The following is a 296-amino-acid chain: tRNA dimethylallyltransferase (296 aa).

Residue 2-9 participates in ATP binding; sequence GPTASGKT. A substrate-binding site is contributed by 4–9; sequence TASGKT. Interaction with substrate tRNA stretches follow at residues 27-30, 151-155, and 232-237; these read DSAL, QRLSR, and RCVGYR.

The protein belongs to the IPP transferase family. Monomer. Requires Mg(2+) as cofactor.

It carries out the reaction adenosine(37) in tRNA + dimethylallyl diphosphate = N(6)-dimethylallyladenosine(37) in tRNA + diphosphate. Catalyzes the transfer of a dimethylallyl group onto the adenine at position 37 in tRNAs that read codons beginning with uridine, leading to the formation of N6-(dimethylallyl)adenosine (i(6)A). In Shewanella sp. (strain MR-7), this protein is tRNA dimethylallyltransferase.